Here is a 372-residue protein sequence, read N- to C-terminus: 4-hydroxy-3-methylbut-2-en-1-yl diphosphate synthase (flavodoxin) (372 aa).

The [4Fe-4S] cluster site is built by Cys270, Cys273, Cys305, and Glu312.

This sequence belongs to the IspG family. It depends on [4Fe-4S] cluster as a cofactor.

The catalysed reaction is (2E)-4-hydroxy-3-methylbut-2-enyl diphosphate + oxidized [flavodoxin] + H2O + 2 H(+) = 2-C-methyl-D-erythritol 2,4-cyclic diphosphate + reduced [flavodoxin]. It functions in the pathway isoprenoid biosynthesis; isopentenyl diphosphate biosynthesis via DXP pathway; isopentenyl diphosphate from 1-deoxy-D-xylulose 5-phosphate: step 5/6. Converts 2C-methyl-D-erythritol 2,4-cyclodiphosphate (ME-2,4cPP) into 1-hydroxy-2-methyl-2-(E)-butenyl 4-diphosphate. The chain is 4-hydroxy-3-methylbut-2-en-1-yl diphosphate synthase (flavodoxin) from Alteromonas mediterranea (strain DSM 17117 / CIP 110805 / LMG 28347 / Deep ecotype).